Reading from the N-terminus, the 182-residue chain is Putative manganese efflux pump MntP (182 aa).

Transmembrane regions (helical) follow at residues 6–26 (LIPLIIMAFALGMDAFSVSLG), 37–57 (ILYIGVTIGIFHIIMPFIGMV), 71–91 (HFAGAILLIGLGFYIVYSSIL), 101–121 (IGISLFVFAFGVSIDSFSVGL), 131–151 (IITILLFGFVSMLLAWIGLLI), and 162–182 (YGEIVGGIILVGFGLYLLFPI).

It belongs to the MntP (TC 9.B.29) family.

Its subcellular location is the cell membrane. Functionally, probably functions as a manganese efflux pump. The sequence is that of Putative manganese efflux pump MntP from Bacillus anthracis (strain A0248).